Here is a 319-residue protein sequence, read N- to C-terminus: G-protein coupled receptor 171 (319 aa).

Residues 1–21 (MTNSSTFCPVYRDLEPFTYFF) lie on the Extracellular side of the membrane. The N-linked (GlcNAc...) asparagine glycan is linked to Asn-3. The helical transmembrane segment at 22 to 42 (YLVFLIGIIGSCFATWAFIQK) threads the bilayer. Topologically, residues 43-48 (NTNHRC) are cytoplasmic. The helical transmembrane segment at 49 to 69 (VSIYLINLLTADFLLTLALPV) threads the bilayer. Over 70–89 (KITVDLGVAPWKLRIFHCQV) the chain is Extracellular. A helical transmembrane segment spans residues 90–110 (TACLIYINMYLSIIFLAFVSI). The Cytoplasmic portion of the chain corresponds to 111 to 132 (DRCLQLTYSCKIYRIQEPGFAK). Residues 133–153 (MISAVVWLMVLLIMVPNMIIP) traverse the membrane as a helical segment. At 154–181 (IKDIKEKPNVGCMEFKSEFGRNWHLLTN) the chain is on the extracellular side. A helical transmembrane segment spans residues 182-202 (FISIAIFFNFSAIILISNCLV). The Cytoplasmic segment spans residues 203–224 (IRQLYRNKDNENYPNVKRALIS). A helical transmembrane segment spans residues 225–245 (ILLVTTGYIICFVPYHIVRIP). The Extracellular segment spans residues 246–268 (YTLSQTEVISDCSTRISLFKAKE). Residues 269-289 (ATLLLAVSNLCFDPILYYHLS) traverse the membrane as a helical segment. Residues 290-319 (KAFRLKITETFASHKESKAQKEKPRSENNA) lie on the Cytoplasmic side of the membrane.

Belongs to the G-protein coupled receptor 1 family.

The protein resides in the cell membrane. Its function is as follows. G-protein coupled receptor for Big LEN, a 16-amino acid neuropeptide produced from the precursor protein, proSAAS (encoded by PCSK1N). Acts through a G(i)-alpha-mediated pathway in response to bigLEN. Big LEN-GPR171 system plays an important role in regulating feeding and metabolism. Also plays a role in modulating fear and anxiety-like behaviors in the basolateral amygdala. Big LEN-GPR171 modulates the mu-type opioid receptor signaling and antinociception. Acts as a negative regulator T cell function. This chain is G-protein coupled receptor 171 (GPR171), found in Bos taurus (Bovine).